We begin with the raw amino-acid sequence, 172 residues long: Adenylate kinase isoenzyme 6 (172 aa).

ATP contacts are provided by Gly-13, Gly-15, Lys-16, Thr-17, and Thr-18. Residues 33-56 (NVGDLAREGELYDGFDEEYNCPIL) form an NMPbind region. The LID stretch occupies residues 108-118 (TRGYSEKKLND). ATP-binding residues include Arg-109 and Lys-148.

Belongs to the adenylate kinase family. AK6 subfamily. As to quaternary structure, monomer and homodimer. Interacts with small ribosomal subunit protein uS11. Not a structural component of 43S pre-ribosomes, but transiently interacts with them by binding to uS11. Interacts with COIL (via C-terminus).

It is found in the cytoplasm. The protein resides in the nucleus. Its subcellular location is the nucleoplasm. The protein localises to the cajal body. The enzyme catalyses AMP + ATP = 2 ADP. The catalysed reaction is ATP + H2O = ADP + phosphate + H(+). Functionally, broad-specificity nucleoside monophosphate (NMP) kinase that catalyzes the reversible transfer of the terminal phosphate group between nucleoside triphosphates and monophosphates. Also has ATPase activity. Involved in the late cytoplasmic maturation steps of the 40S ribosomal particles, specifically 18S rRNA maturation. While NMP activity is not required for ribosome maturation, ATPase activity is. Associates transiently with small ribosomal subunit protein uS11. ATP hydrolysis breaks the interaction with uS11. May temporarily remove uS11 from the ribosome to enable a conformational change of the ribosomal RNA that is needed for the final maturation step of the small ribosomal subunit. Its NMP activity may have a role in nuclear energy homeostasis. May be involved in regulation of Cajal body (CB) formation. The polypeptide is Adenylate kinase isoenzyme 6 (Oryctolagus cuniculus (Rabbit)).